We begin with the raw amino-acid sequence, 205 residues long: Imidazole glycerol phosphate synthase subunit HisH (205 aa).

Residues 3 to 205 (KIGLIDYGMG…LLRRWLSNIQ (203 aa)) enclose the Glutamine amidotransferase type-1 domain. The Nucleophile role is filled by cysteine 81. Residues histidine 185 and glutamate 187 contribute to the active site.

As to quaternary structure, heterodimer of HisH and HisF.

The protein resides in the cytoplasm. It catalyses the reaction 5-[(5-phospho-1-deoxy-D-ribulos-1-ylimino)methylamino]-1-(5-phospho-beta-D-ribosyl)imidazole-4-carboxamide + L-glutamine = D-erythro-1-(imidazol-4-yl)glycerol 3-phosphate + 5-amino-1-(5-phospho-beta-D-ribosyl)imidazole-4-carboxamide + L-glutamate + H(+). The catalysed reaction is L-glutamine + H2O = L-glutamate + NH4(+). The protein operates within amino-acid biosynthesis; L-histidine biosynthesis; L-histidine from 5-phospho-alpha-D-ribose 1-diphosphate: step 5/9. Its function is as follows. IGPS catalyzes the conversion of PRFAR and glutamine to IGP, AICAR and glutamate. The HisH subunit catalyzes the hydrolysis of glutamine to glutamate and ammonia as part of the synthesis of IGP and AICAR. The resulting ammonia molecule is channeled to the active site of HisF. This Prochlorococcus marinus (strain MIT 9312) protein is Imidazole glycerol phosphate synthase subunit HisH.